A 357-amino-acid polypeptide reads, in one-letter code: tRNA N6-adenosine threonylcarbamoyltransferase (357 aa).

2 residues coordinate Fe cation: His-113 and His-117. Substrate contacts are provided by residues 136-140 (LVSGG), Asp-169, Gly-182, and Asn-288. Residue Asp-316 participates in Fe cation binding.

It belongs to the KAE1 / TsaD family. Requires Fe(2+) as cofactor.

The protein resides in the cytoplasm. It carries out the reaction L-threonylcarbamoyladenylate + adenosine(37) in tRNA = N(6)-L-threonylcarbamoyladenosine(37) in tRNA + AMP + H(+). Required for the formation of a threonylcarbamoyl group on adenosine at position 37 (t(6)A37) in tRNAs that read codons beginning with adenine. Is involved in the transfer of the threonylcarbamoyl moiety of threonylcarbamoyl-AMP (TC-AMP) to the N6 group of A37, together with TsaE and TsaB. TsaD likely plays a direct catalytic role in this reaction. The polypeptide is tRNA N6-adenosine threonylcarbamoyltransferase (Gemmatimonas aurantiaca (strain DSM 14586 / JCM 11422 / NBRC 100505 / T-27)).